Here is a 134-residue protein sequence, read N- to C-terminus: B3 domain-containing protein At1g16640 (134 aa).

Residues 7–100 (VQFMKPFISE…TFYVIIYGHN (94 aa)) constitute a DNA-binding region (TF-B3).

It is found in the nucleus. The chain is B3 domain-containing protein At1g16640 from Arabidopsis thaliana (Mouse-ear cress).